Consider the following 122-residue polypeptide: Large ribosomal subunit protein uL18 (122 aa).

The protein belongs to the universal ribosomal protein uL18 family. In terms of assembly, part of the 50S ribosomal subunit; part of the 5S rRNA/L5/L18/L25 subcomplex. Contacts the 5S and 23S rRNAs.

Its function is as follows. This is one of the proteins that bind and probably mediate the attachment of the 5S RNA into the large ribosomal subunit, where it forms part of the central protuberance. The chain is Large ribosomal subunit protein uL18 from Kosmotoga olearia (strain ATCC BAA-1733 / DSM 21960 / TBF 19.5.1).